Consider the following 291-residue polypeptide: 5'-3' exonuclease (291 aa).

One can recognise a 5'-3' exonuclease domain in the interval 176-269 (APYQVVEYKG…DLTGLKPIQK (94 aa)).

5'-3' exonuclease acting preferentially on double-stranded DNA. This is 5'-3' exonuclease (polA) from Mycoplasma genitalium (strain ATCC 33530 / DSM 19775 / NCTC 10195 / G37) (Mycoplasmoides genitalium).